Here is an 84-residue protein sequence, read N- to C-terminus: UPF0410 protein YmgE (84 aa).

Transmembrane regions (helical) follow at residues 1–21, 27–47, and 58–78; these read MGII…KLIM, GGFF…GWLA, and GFNL…LGIF.

It belongs to the UPF0410 family.

Its subcellular location is the cell inner membrane. This Escherichia coli (strain K12) protein is UPF0410 protein YmgE (ymgE).